The sequence spans 308 residues: Coenzyme PQQ synthesis protein B (308 aa).

It belongs to the PqqB family.

The protein operates within cofactor biosynthesis; pyrroloquinoline quinone biosynthesis. In terms of biological role, may be involved in the transport of PQQ or its precursor to the periplasm. This is Coenzyme PQQ synthesis protein B from Klebsiella pneumoniae subsp. pneumoniae (strain ATCC 700721 / MGH 78578).